Consider the following 130-residue polypeptide: Small ribosomal subunit protein uS9 (130 aa).

The protein belongs to the universal ribosomal protein uS9 family.

This Vibrio campbellii (strain ATCC BAA-1116) protein is Small ribosomal subunit protein uS9.